A 224-amino-acid polypeptide reads, in one-letter code: Probable proteasome subunit beta type-4 (224 aa).

Belongs to the peptidase T1B family. The 26S proteasome consists of a 20S proteasome core and two 19S regulatory subunits. The 20S proteasome core is composed of 28 subunits that are arranged in four stacked rings, resulting in a barrel-shaped structure. The two end rings are each formed by seven alpha subunits, and the two central rings are each formed by seven beta subunits. The catalytic chamber with the active sites is on the inside of the barrel.

It localises to the cytoplasm. The protein localises to the nucleus. Its function is as follows. Non-catalytic component of the proteasome, a multicatalytic proteinase complex which is characterized by its ability to cleave peptides with Arg, Phe, Tyr, Leu, and Glu adjacent to the leaving group at neutral or slightly basic pH. The proteasome has an ATP-dependent proteolytic activity. This chain is Probable proteasome subunit beta type-4 (CPR1), found in Cryptococcus neoformans var. neoformans serotype D (strain B-3501A) (Filobasidiella neoformans).